The following is an 840-amino-acid chain: Probable sulfate permease C869.05c (840 aa).

Helical transmembrane passes span 120–140 (WLIN…PQGM), 148–168 (LPSE…CFFA), 173–193 (VSIG…ANVM), 208–228 (LALL…GFII), 230–250 (FIPV…ILSG), 278–298 (LPDT…LFFT), 315–335 (AFFL…TAIS), 410–430 (LIAM…PATG), 447–467 (IAGI…TDAF), 470–490 (IPNA…ILPM), 505–525 (CIFF…GIYV), and 527–547 (VCLA…SFLG). The STAS domain maps to 578–733 (NLEIQSPPPG…CVEVAAPLRD (156 aa)). Phosphoserine is present on Ser823.

It belongs to the SLC26A/SulP transporter (TC 2.A.53) family.

It is found in the membrane. Functionally, high affinity uptake of sulfate into the cell. This is Probable sulfate permease C869.05c from Schizosaccharomyces pombe (strain 972 / ATCC 24843) (Fission yeast).